Consider the following 398-residue polypeptide: Serpin-Z1A (398 aa).

The tract at residues 343–367 (GTEAAASTAIKMVLQQARPPSVMDF) is RCL.

The protein belongs to the serpin family.

Inhibits chymotrypsin and cathepsin G in vitro. The chain is Serpin-Z1A (WZCI) from Triticum aestivum (Wheat).